The following is a 286-amino-acid chain: Puff II/9-2 protein (286 aa).

The first 19 residues, 1–19 (MKQFIVLTVVLLAIQELQG), serve as a signal peptide directing secretion. Positions 61-235 (IDGLKKENNI…EKDLNTLRCE (175 aa)) are helical. N156 carries N-linked (GlcNAc...) asparagine glycosylation.

The sequence is that of Puff II/9-2 protein (II/9-2) from Bradysia coprophila (Dark-winged fungus gnat).